Here is a 372-residue protein sequence, read N- to C-terminus: Queuine tRNA-ribosyltransferase (372 aa).

The active-site Proton acceptor is D90. Substrate contacts are provided by residues 90–94, D144, Q193, and G220; that span reads DSGGF. The RNA binding stretch occupies residues 251 to 257; the sequence is GVGTPED. Residue D270 is the Nucleophile of the active site. Positions 275–279 are RNA binding; important for wobble base 34 recognition; the sequence is TRNAR. 4 residues coordinate Zn(2+): C308, C310, C313, and H339.

The protein belongs to the queuine tRNA-ribosyltransferase family. In terms of assembly, homodimer. Within each dimer, one monomer is responsible for RNA recognition and catalysis, while the other monomer binds to the replacement base PreQ1. Requires Zn(2+) as cofactor.

The catalysed reaction is 7-aminomethyl-7-carbaguanine + guanosine(34) in tRNA = 7-aminomethyl-7-carbaguanosine(34) in tRNA + guanine. The protein operates within tRNA modification; tRNA-queuosine biosynthesis. Its function is as follows. Catalyzes the base-exchange of a guanine (G) residue with the queuine precursor 7-aminomethyl-7-deazaguanine (PreQ1) at position 34 (anticodon wobble position) in tRNAs with GU(N) anticodons (tRNA-Asp, -Asn, -His and -Tyr). Catalysis occurs through a double-displacement mechanism. The nucleophile active site attacks the C1' of nucleotide 34 to detach the guanine base from the RNA, forming a covalent enzyme-RNA intermediate. The proton acceptor active site deprotonates the incoming PreQ1, allowing a nucleophilic attack on the C1' of the ribose to form the product. After dissociation, two additional enzymatic reactions on the tRNA convert PreQ1 to queuine (Q), resulting in the hypermodified nucleoside queuosine (7-(((4,5-cis-dihydroxy-2-cyclopenten-1-yl)amino)methyl)-7-deazaguanosine). The chain is Queuine tRNA-ribosyltransferase from Campylobacter hominis (strain ATCC BAA-381 / DSM 21671 / CCUG 45161 / LMG 19568 / NCTC 13146 / CH001A).